The sequence spans 125 residues: 17 kDa gas vesicle protein (125 aa).

Belongs to the gas vesicle GvpC family.

The protein resides in the gas vesicle. In terms of biological role, gas vesicles (GV) are hollow, gas filled proteinaceous nanostructures. During planktonic growth they allow positioning of the organism at a favorable depth for light or nutrient acquisition. This is 17 kDa gas vesicle protein from Dactylococcopsis salina (strain PCC 8305) (Myxobactron salinum).